The chain runs to 137 residues: Peptide methionine sulfoxide reductase MsrB (137 aa).

Positions 7 to 129 constitute a MsrB domain; it reads PGELKNGLSE…NSASLSFTDE (123 aa). Zn(2+) is bound by residues Cys46, Cys49, Cys95, and Cys98. Cys118 acts as the Nucleophile in catalysis.

The protein belongs to the MsrB Met sulfoxide reductase family. Zn(2+) serves as cofactor.

The catalysed reaction is L-methionyl-[protein] + [thioredoxin]-disulfide + H2O = L-methionyl-(R)-S-oxide-[protein] + [thioredoxin]-dithiol. The protein is Peptide methionine sulfoxide reductase MsrB of Klebsiella pneumoniae (strain 342).